A 1369-amino-acid chain; its full sequence is Phospholipase D1 (1369 aa).

2 disordered regions span residues 27–90 (YSEK…SSWH) and 318–340 (ESHS…GRKK). Positions 31–53 (GTGRKDAEDHTPSKITDLEKNVD) are enriched in basic and acidic residues. In terms of domain architecture, PX spans 208 to 379 (TDLIKVSVLD…NVLYSFLEFS (172 aa)). PLD phosphodiesterase domains lie at 641-668 (LFWA…CFGR) and 941-968 (EMIY…NERS). The span at 1277 to 1289 (HETHEKSENDPKN) shows a compositional bias: basic and acidic residues. Positions 1277-1320 (HETHEKSENDPKNPKAGSQGSGNTSASEDSKTEKPKTRTNNGLQ) are disordered. Polar residues predominate over residues 1292–1303 (AGSQGSGNTSAS).

It belongs to the phospholipase D family.

It localises to the cytoplasm. It catalyses the reaction a 1,2-diacyl-sn-glycero-3-phosphocholine + H2O = a 1,2-diacyl-sn-glycero-3-phosphate + choline + H(+). Its activity is regulated as follows. Activity is slightly stimulated by oleate. Functionally, required for meiosis and spore formation. Seems to be involved in the coordinate induction of late meiotic events. This Schizosaccharomyces pombe (strain 972 / ATCC 24843) (Fission yeast) protein is Phospholipase D1 (pld1).